Reading from the N-terminus, the 357-residue chain is MSVAQPRLLFAASGTGGHVFPALAVAEALPEAKIDWLGVPDRLETQLVGDRYPLHTIRVGGFQGSWLLRPLTALRLIGAIFKVRRLLKRQQIEAVFTTGGYIAGPAIAAAWSLGIPVVLHESNALPGKTTRLLSRFCRRVALGFAEAGEYLPGRPLQVVGTPLRSQFYQPSQHGLPIPENVPVLLVMGGSQGAVAINRLVRAAAPAWLAAGLWIVHLTGQQDPDRGQLQHPQYIELSFVDNVAPLLNRADFSISRAGAGSLAELAAAGLPSLLIPYPFAAEDHQTFNARIFAKAGAAILAPQSELTVEQLQQQILDLLRARLGAAIANPLPKMAAAAGKLHVADSAEQVANLLRSLL.

UDP-N-acetyl-alpha-D-glucosamine-binding positions include 15-17 (TGG), N123, R164, S190, and Q284.

It belongs to the glycosyltransferase 28 family. MurG subfamily.

It is found in the cell inner membrane. It carries out the reaction di-trans,octa-cis-undecaprenyl diphospho-N-acetyl-alpha-D-muramoyl-L-alanyl-D-glutamyl-meso-2,6-diaminopimeloyl-D-alanyl-D-alanine + UDP-N-acetyl-alpha-D-glucosamine = di-trans,octa-cis-undecaprenyl diphospho-[N-acetyl-alpha-D-glucosaminyl-(1-&gt;4)]-N-acetyl-alpha-D-muramoyl-L-alanyl-D-glutamyl-meso-2,6-diaminopimeloyl-D-alanyl-D-alanine + UDP + H(+). The protein operates within cell wall biogenesis; peptidoglycan biosynthesis. Its function is as follows. Cell wall formation. Catalyzes the transfer of a GlcNAc subunit on undecaprenyl-pyrophosphoryl-MurNAc-pentapeptide (lipid intermediate I) to form undecaprenyl-pyrophosphoryl-MurNAc-(pentapeptide)GlcNAc (lipid intermediate II). The protein is UDP-N-acetylglucosamine--N-acetylmuramyl-(pentapeptide) pyrophosphoryl-undecaprenol N-acetylglucosamine transferase of Synechococcus elongatus (strain ATCC 33912 / PCC 7942 / FACHB-805) (Anacystis nidulans R2).